A 505-amino-acid chain; its full sequence is MFS efflux pump atnC (505 aa).

Helical transmembrane passes span 48-68 (VLQV…GLTV), 117-137 (LIGW…IPYG), 148-168 (VLLL…LVCW), 181-201 (LFQC…ATIA), 216-236 (LQAT…VLMA), 240-260 (WTPC…LIAL), 304-324 (VAGL…LDFL), 343-363 (LSLR…LLLF), 377-399 (LLIA…LSPT), 403-425 (AILV…ASLW), 439-459 (TVAI…SLMY), and 469-489 (WVGL…GVLL).

It belongs to the major facilitator superfamily.

It is found in the membrane. It participates in secondary metabolite biosynthesis. Its function is as follows. MFS efflux pump; part of the gene cluster that mediates the biosynthesis of aspercryptins, linear lipopeptides built from six amino acids including 2 highly unusual and nonproteogenic amino acids, 2-amino-octanoic acid (2aoa) and 2-amino-dodecanol (2adol). In Emericella nidulans (strain FGSC A4 / ATCC 38163 / CBS 112.46 / NRRL 194 / M139) (Aspergillus nidulans), this protein is MFS efflux pump atnC.